A 679-amino-acid chain; its full sequence is Protein hook (679 aa).

In terms of domain architecture, Calponin-homology (CH) spans 6-123 (NEMYYSLLEW…RLLQLVLGCA (118 aa)). Coiled coils occupy residues 135–437 (EIMC…LKCG) and 480–574 (QTAL…QEIL).

This sequence belongs to the hook family. As to quaternary structure, homodimer. Interacts with microtubules via its N-terminus.

The protein resides in the cytoplasm. The protein localises to the cytoskeleton. It is found in the endosome. Its subcellular location is the synapse. Functionally, involved in endocytic trafficking by stabilizing organelles of the endocytic pathway. Probably acts as a cytoskeletal linker protein required to tether endosome vesicles to the cytoskeleton. Involved in modulation of endocytosis at stages required for down-regulation of membrane proteins that control synapse size. Not involved in synaptic vesicle recycling. Required in R7 cells for boss endocytosis into multivesicular bodies (MVBs). Has a role in regulating adult longevity. This chain is Protein hook, found in Drosophila sechellia (Fruit fly).